The chain runs to 274 residues: Hydroxyethylthiazole kinase (274 aa).

Met-51 is a substrate binding site. Residues Arg-127 and Ser-173 each coordinate ATP. Position 200 (Gly-200) interacts with substrate.

It belongs to the Thz kinase family. Mg(2+) is required as a cofactor.

It carries out the reaction 5-(2-hydroxyethyl)-4-methylthiazole + ATP = 4-methyl-5-(2-phosphooxyethyl)-thiazole + ADP + H(+). The protein operates within cofactor biosynthesis; thiamine diphosphate biosynthesis; 4-methyl-5-(2-phosphoethyl)-thiazole from 5-(2-hydroxyethyl)-4-methylthiazole: step 1/1. In terms of biological role, catalyzes the phosphorylation of the hydroxyl group of 4-methyl-5-beta-hydroxyethylthiazole (THZ). This chain is Hydroxyethylthiazole kinase, found in Photobacterium profundum (strain SS9).